We begin with the raw amino-acid sequence, 303 residues long: Tyrosine-protein phosphatase 3 (303 aa).

The 269-residue stretch at 24-292 (YMIIEGLNEE…VFLYTVSQEL (269 aa)) folds into the Tyrosine-protein phosphatase domain. Cys227 serves as the catalytic Phosphocysteine intermediate.

The protein belongs to the protein-tyrosine phosphatase family. Non-receptor class subfamily.

It localises to the cytoplasm. It catalyses the reaction O-phospho-L-tyrosyl-[protein] + H2O = L-tyrosyl-[protein] + phosphate. Contributes to dephosphorylation of tyrosine 15 of cdc2. This Schizosaccharomyces pombe (strain 972 / ATCC 24843) (Fission yeast) protein is Tyrosine-protein phosphatase 3 (pyp3).